A 389-amino-acid polypeptide reads, in one-letter code: Formate-dependent phosphoribosylglycinamide formyltransferase (389 aa).

N(1)-(5-phospho-beta-D-ribosyl)glycinamide is bound by residues 15-16 (EL) and glutamate 75. Residues arginine 107, lysine 148, 153–158 (SSGKGQ), 188–191 (EEFL), and glutamate 196 contribute to the ATP site. One can recognise an ATP-grasp domain in the interval 112-302 (DLAAGELALR…EFELHLRAVL (191 aa)). Mg(2+) is bound by residues glutamate 261 and glutamate 273. Residues aspartate 280, lysine 350, and 357-358 (RR) each bind N(1)-(5-phospho-beta-D-ribosyl)glycinamide.

It belongs to the PurK/PurT family. As to quaternary structure, homodimer.

The enzyme catalyses N(1)-(5-phospho-beta-D-ribosyl)glycinamide + formate + ATP = N(2)-formyl-N(1)-(5-phospho-beta-D-ribosyl)glycinamide + ADP + phosphate + H(+). It functions in the pathway purine metabolism; IMP biosynthesis via de novo pathway; N(2)-formyl-N(1)-(5-phospho-D-ribosyl)glycinamide from N(1)-(5-phospho-D-ribosyl)glycinamide (formate route): step 1/1. Its function is as follows. Involved in the de novo purine biosynthesis. Catalyzes the transfer of formate to 5-phospho-ribosyl-glycinamide (GAR), producing 5-phospho-ribosyl-N-formylglycinamide (FGAR). Formate is provided by PurU via hydrolysis of 10-formyl-tetrahydrofolate. This chain is Formate-dependent phosphoribosylglycinamide formyltransferase, found in Synechococcus sp. (strain WH7803).